A 220-amino-acid polypeptide reads, in one-letter code: uncharacterized protein (220 aa).

The next 7 helical transmembrane spans lie at 25 to 45 (YFLL…SMSL), 50 to 70 (PGLI…YKLS), 74 to 94 (LGIL…GPIL), 105 to 125 (IVVL…AYVL), 135 to 155 (SGTI…SFFF), 158 to 178 (PMLY…GILY), and 196 to 216 (VSIF…FSIL).

The protein belongs to the BI1 family.

The protein localises to the cell membrane. This is an uncharacterized protein from Pasteurella multocida (strain Pm70).